We begin with the raw amino-acid sequence, 202 residues long: Crustacean calcium-binding protein 23 (202 aa).

The residue at position 1 (Ser-1) is an N-acetylserine. EF-hand domains are found at residues 33–68, 69–104, 105–140, and 148–185; these read SGLLSLGRLFRRLDKDRSWTLSKEELSRGVGQFGLD, LSDGDINKLFSSFEKDGQSGINYEEFLESLRPEMTE, PRKKAVEAAFKHLDKTGDGVVGLEDIKGKYSAKTHP, and TEDEILKKFLNMFETNTSVDGKVTKKEFFDYYSGLSKA. 5 residues coordinate Ca(2+): Asp-84, Glu-93, Asp-118, Asp-122, and Asp-129.

In terms of assembly, monomer or disulfide-linked dimers. In terms of tissue distribution, striated muscle and brain.

Its function is as follows. Possibly acts as a regulatory protein and not as a calcium buffer or transport protein. The sequence is that of Crustacean calcium-binding protein 23 from Faxonius limosus (Spinycheek crayfish).